The chain runs to 424 residues: Serine hydroxymethyltransferase 1 (424 aa).

Residues Leu125 and 129-131 contribute to the (6S)-5,6,7,8-tetrahydrofolate site; that span reads GHL. The residue at position 234 (Lys234) is an N6-(pyridoxal phosphate)lysine.

It belongs to the SHMT family. In terms of assembly, homodimer. Pyridoxal 5'-phosphate is required as a cofactor.

The protein localises to the cytoplasm. It carries out the reaction (6R)-5,10-methylene-5,6,7,8-tetrahydrofolate + glycine + H2O = (6S)-5,6,7,8-tetrahydrofolate + L-serine. It functions in the pathway one-carbon metabolism; tetrahydrofolate interconversion. Its pathway is amino-acid biosynthesis; glycine biosynthesis; glycine from L-serine: step 1/1. Functionally, catalyzes the reversible interconversion of serine and glycine with tetrahydrofolate (THF) serving as the one-carbon carrier. This reaction serves as the major source of one-carbon groups required for the biosynthesis of purines, thymidylate, methionine, and other important biomolecules. Also exhibits THF-independent aldolase activity toward beta-hydroxyamino acids, producing glycine and aldehydes, via a retro-aldol mechanism. This Burkholderia lata (strain ATCC 17760 / DSM 23089 / LMG 22485 / NCIMB 9086 / R18194 / 383) protein is Serine hydroxymethyltransferase 1.